We begin with the raw amino-acid sequence, 222 residues long: Matrix protein (222 aa).

The PTAP/PSAP motif signature appears at 46–49; the sequence is PTAP.

Homomultimer. Interacts with viral nucleocapsid. Interacts with host TSG101.

The protein localises to the virion membrane. The protein resides in the host endomembrane system. It localises to the host nucleus membrane. Its function is as follows. Plays a major role in assembly and budding of virion, by recruiting cellular partners of the ESCRT complexes that play a key role in releasing the budding particle from the host membrane. Condensates the ribonucleocapsid core during virus assembly. The sequence is that of Matrix protein (M) from Drosophila melanogaster (Fruit fly).